Consider the following 226-residue polypeptide: Phosphoribosyl-dephospho-CoA transferase (226 aa).

Catalysis depends on residues aspartate 148 and aspartate 150.

Belongs to the MdcG family.

The catalysed reaction is apo-[malonate decarboxylase ACP] + 2'-(5''-triphospho-alpha-D-ribosyl)-3'-dephospho-CoA = holo-[malonate decarboxylase ACP] + diphosphate. In terms of biological role, transfers 2'-(5-triphosphoribosyl)-3'-dephosphocoenzyme-A to the apo-[acyl-carrier-protein] of the malonate decarboxylase to yield holo-[acyl-carrier-protein]. The polypeptide is Phosphoribosyl-dephospho-CoA transferase (Bradyrhizobium diazoefficiens (strain JCM 10833 / BCRC 13528 / IAM 13628 / NBRC 14792 / USDA 110)).